Here is a 259-residue protein sequence, read N- to C-terminus: Haloacid dehalogenase-like hydrolase domain-containing protein 2 (259 aa).

Mg(2+) contacts are provided by D13 and N15. Substrate contacts are provided by residues 13–15 (DLN) and 46–47 (TN). Residues 47–72 (NTTKESKKDLLERLKKLEFEISEDEI) are a coiled coil. K50 is subject to N6-succinyllysine. K179 serves as a coordination point for substrate. Residue D204 participates in Mg(2+) binding.

The protein belongs to the HAD-like hydrolase superfamily. It depends on Mg(2+) as a cofactor.

This is Haloacid dehalogenase-like hydrolase domain-containing protein 2 (Hdhd2) from Mus musculus (Mouse).